A 612-amino-acid polypeptide reads, in one-letter code: Elongation factor 4 (612 aa).

Residues 11-193 (KHIRNFSIIA…KLVTDVPAPT (183 aa)) form the tr-type G domain. Residues 23–28 (DHGKST) and 140–143 (NKID) each bind GTP.

This sequence belongs to the TRAFAC class translation factor GTPase superfamily. Classic translation factor GTPase family. LepA subfamily.

It localises to the cell membrane. The enzyme catalyses GTP + H2O = GDP + phosphate + H(+). Functionally, required for accurate and efficient protein synthesis under certain stress conditions. May act as a fidelity factor of the translation reaction, by catalyzing a one-codon backward translocation of tRNAs on improperly translocated ribosomes. Back-translocation proceeds from a post-translocation (POST) complex to a pre-translocation (PRE) complex, thus giving elongation factor G a second chance to translocate the tRNAs correctly. Binds to ribosomes in a GTP-dependent manner. This chain is Elongation factor 4, found in Latilactobacillus sakei subsp. sakei (strain 23K) (Lactobacillus sakei subsp. sakei).